Consider the following 509-residue polypeptide: ATP synthase subunit alpha 1 (509 aa).

ATP is bound at residue G172–T179.

The protein belongs to the ATPase alpha/beta chains family. As to quaternary structure, F-type ATPases have 2 components, CF(1) - the catalytic core - and CF(0) - the membrane proton channel. CF(1) has five subunits: alpha(3), beta(3), gamma(1), delta(1), epsilon(1). CF(0) has four main subunits: a(1), b(1), b'(1) and c(9-12).

The protein localises to the cell inner membrane. The catalysed reaction is ATP + H2O + 4 H(+)(in) = ADP + phosphate + 5 H(+)(out). Functionally, produces ATP from ADP in the presence of a proton gradient across the membrane. The alpha chain is a regulatory subunit. The chain is ATP synthase subunit alpha 1 from Dinoroseobacter shibae (strain DSM 16493 / NCIMB 14021 / DFL 12).